The chain runs to 68 residues: Beta-defensin 1 (68 aa).

The N-terminal stretch at 1–21 (MRTSYLLLFTLCLLLSEMASG) is a signal peptide. Residues 22–32 (DNFLTGLGHRS) constitute a propeptide that is removed on maturation. Cystine bridges form between Cys-37-Cys-66, Cys-44-Cys-59, and Cys-49-Cys-67.

Belongs to the beta-defensin family. As to quaternary structure, monomer. Homodimer.

It is found in the secreted. The protein resides in the membrane. In terms of biological role, has bactericidal activity. May act as a ligand for C-C chemokine receptor CCR6. Positively regulates the sperm motility and bactericidal activity in a CCR6-dependent manner. Binds to CCR6 and triggers Ca2+ mobilization in the sperm which is important for its motility. This Allochrocebus preussi (Preuss's monkey) protein is Beta-defensin 1 (DEFB1).